A 734-amino-acid chain; its full sequence is Photosystem I P700 chlorophyll a apoprotein A2 (734 aa).

The next 8 membrane-spanning stretches (helical) occupy residues 46-69 (IFASHFGQLAIIFLWTSGNLFHVA), 135-158 (LYTGALFLLFLSVISLLGGWLHLQ), 175-199 (LNHHLSGLFGVSSLAWTGHLVHVAI), 273-291 (MAHHHLAIAFVFLVAGHMY), 330-353 (LHFQLGLALASLGVITSLVAQHMY), 369-395 (AALYTHHQYIAGFIMTGAFAHGAIFFI), 417-439 (AIISHLSWASLFLGFHTLGLYVH), and 517-535 (FLVHHAIALGLHTTTLILV). [4Fe-4S] cluster-binding residues include Cys-559 and Cys-568. 2 helical membrane-spanning segments follow: residues 575–596 (AFYLAVFWMLNTIGWVTFYWHW) and 643–665 (LSVWAWMFLFGHLVWATGFMFLI). His-654, Met-662, and Tyr-670 together coordinate chlorophyll a. Trp-671 is a binding site for phylloquinone. Residues 707–727 (LVGLAHFSVGYIFTYAAFLIA) form a helical membrane-spanning segment.

It belongs to the PsaA/PsaB family. The PsaA/B heterodimer binds the P700 chlorophyll special pair and subsequent electron acceptors. PSI consists of a core antenna complex that captures photons, and an electron transfer chain that converts photonic excitation into a charge separation. The eukaryotic PSI reaction center is composed of at least 11 subunits. P700 is a chlorophyll a/chlorophyll a' dimer, A0 is one or more chlorophyll a, A1 is one or both phylloquinones and FX is a shared 4Fe-4S iron-sulfur center. serves as cofactor.

The protein localises to the plastid. The protein resides in the chloroplast thylakoid membrane. It catalyses the reaction reduced [plastocyanin] + hnu + oxidized [2Fe-2S]-[ferredoxin] = oxidized [plastocyanin] + reduced [2Fe-2S]-[ferredoxin]. In terms of biological role, psaA and PsaB bind P700, the primary electron donor of photosystem I (PSI), as well as the electron acceptors A0, A1 and FX. PSI is a plastocyanin-ferredoxin oxidoreductase, converting photonic excitation into a charge separation, which transfers an electron from the donor P700 chlorophyll pair to the spectroscopically characterized acceptors A0, A1, FX, FA and FB in turn. Oxidized P700 is reduced on the lumenal side of the thylakoid membrane by plastocyanin. This Spinacia oleracea (Spinach) protein is Photosystem I P700 chlorophyll a apoprotein A2.